Reading from the N-terminus, the 353-residue chain is Quinolinate synthase (353 aa).

His47 and Ser68 together coordinate iminosuccinate. Cys113 is a [4Fe-4S] cluster binding site. Iminosuccinate contacts are provided by residues Tyr139–Asn141 and Ser156. Position 200 (Cys200) interacts with [4Fe-4S] cluster. Iminosuccinate contacts are provided by residues His226 to Glu228 and Thr243. Cys297 is a [4Fe-4S] cluster binding site.

This sequence belongs to the quinolinate synthase family. Type 1 subfamily. [4Fe-4S] cluster serves as cofactor.

It is found in the cytoplasm. The catalysed reaction is iminosuccinate + dihydroxyacetone phosphate = quinolinate + phosphate + 2 H2O + H(+). Its pathway is cofactor biosynthesis; NAD(+) biosynthesis; quinolinate from iminoaspartate: step 1/1. Its function is as follows. Catalyzes the condensation of iminoaspartate with dihydroxyacetone phosphate to form quinolinate. The protein is Quinolinate synthase of Vibrio campbellii (strain ATCC BAA-1116).